We begin with the raw amino-acid sequence, 366 residues long: Histidinol-phosphate aminotransferase (366 aa).

Lys228 carries the N6-(pyridoxal phosphate)lysine modification.

Belongs to the class-II pyridoxal-phosphate-dependent aminotransferase family. Histidinol-phosphate aminotransferase subfamily. As to quaternary structure, homodimer. The cofactor is pyridoxal 5'-phosphate.

The catalysed reaction is L-histidinol phosphate + 2-oxoglutarate = 3-(imidazol-4-yl)-2-oxopropyl phosphate + L-glutamate. It functions in the pathway amino-acid biosynthesis; L-histidine biosynthesis; L-histidine from 5-phospho-alpha-D-ribose 1-diphosphate: step 7/9. This is Histidinol-phosphate aminotransferase from Corynebacterium glutamicum (strain ATCC 13032 / DSM 20300 / JCM 1318 / BCRC 11384 / CCUG 27702 / LMG 3730 / NBRC 12168 / NCIMB 10025 / NRRL B-2784 / 534).